The sequence spans 339 residues: Holliday junction branch migration complex subunit RuvB (339 aa).

The tract at residues 1-180 (MTRTITPDMT…FGVISRLEFY (180 aa)) is large ATPase domain (RuvB-L). Residues leucine 19, arginine 20, glycine 61, lysine 64, threonine 65, threonine 66, 127 to 129 (EDF), arginine 170, tyrosine 180, and arginine 217 each bind ATP. Threonine 65 provides a ligand contact to Mg(2+). Residues 181 to 251 (TIEELAFIIT…VVQDALALLE (71 aa)) are small ATPAse domain (RuvB-S). The interval 254 to 339 (HMGFDYMDRM…EPPQGKLFQD (86 aa)) is head domain (RuvB-H). DNA is bound by residues arginine 309 and arginine 314.

The protein belongs to the RuvB family. As to quaternary structure, homohexamer. Forms an RuvA(8)-RuvB(12)-Holliday junction (HJ) complex. HJ DNA is sandwiched between 2 RuvA tetramers; dsDNA enters through RuvA and exits via RuvB. An RuvB hexamer assembles on each DNA strand where it exits the tetramer. Each RuvB hexamer is contacted by two RuvA subunits (via domain III) on 2 adjacent RuvB subunits; this complex drives branch migration. In the full resolvosome a probable DNA-RuvA(4)-RuvB(12)-RuvC(2) complex forms which resolves the HJ.

Its subcellular location is the cytoplasm. It carries out the reaction ATP + H2O = ADP + phosphate + H(+). In terms of biological role, the RuvA-RuvB-RuvC complex processes Holliday junction (HJ) DNA during genetic recombination and DNA repair, while the RuvA-RuvB complex plays an important role in the rescue of blocked DNA replication forks via replication fork reversal (RFR). RuvA specifically binds to HJ cruciform DNA, conferring on it an open structure. The RuvB hexamer acts as an ATP-dependent pump, pulling dsDNA into and through the RuvAB complex. RuvB forms 2 homohexamers on either side of HJ DNA bound by 1 or 2 RuvA tetramers; 4 subunits per hexamer contact DNA at a time. Coordinated motions by a converter formed by DNA-disengaged RuvB subunits stimulates ATP hydrolysis and nucleotide exchange. Immobilization of the converter enables RuvB to convert the ATP-contained energy into a lever motion, pulling 2 nucleotides of DNA out of the RuvA tetramer per ATP hydrolyzed, thus driving DNA branch migration. The RuvB motors rotate together with the DNA substrate, which together with the progressing nucleotide cycle form the mechanistic basis for DNA recombination by continuous HJ branch migration. Branch migration allows RuvC to scan DNA until it finds its consensus sequence, where it cleaves and resolves cruciform DNA. This chain is Holliday junction branch migration complex subunit RuvB, found in Geotalea daltonii (strain DSM 22248 / JCM 15807 / FRC-32) (Geobacter daltonii).